We begin with the raw amino-acid sequence, 474 residues long: tRNA-2-methylthio-N(6)-dimethylallyladenosine synthase (474 aa).

Residues K3–G120 form the MTTase N-terminal domain. 6 residues coordinate [4Fe-4S] cluster: C12, C49, C83, C157, C161, and C164. The Radical SAM core domain maps to R143–E375. Residues R378 to R441 enclose the TRAM domain.

This sequence belongs to the methylthiotransferase family. MiaB subfamily. Monomer. [4Fe-4S] cluster serves as cofactor.

The protein localises to the cytoplasm. It catalyses the reaction N(6)-dimethylallyladenosine(37) in tRNA + (sulfur carrier)-SH + AH2 + 2 S-adenosyl-L-methionine = 2-methylsulfanyl-N(6)-dimethylallyladenosine(37) in tRNA + (sulfur carrier)-H + 5'-deoxyadenosine + L-methionine + A + S-adenosyl-L-homocysteine + 2 H(+). Functionally, catalyzes the methylthiolation of N6-(dimethylallyl)adenosine (i(6)A), leading to the formation of 2-methylthio-N6-(dimethylallyl)adenosine (ms(2)i(6)A) at position 37 in tRNAs that read codons beginning with uridine. This Yersinia pestis bv. Antiqua (strain Angola) protein is tRNA-2-methylthio-N(6)-dimethylallyladenosine synthase.